A 264-amino-acid polypeptide reads, in one-letter code: tRNA pseudouridine synthase A (264 aa).

Residue aspartate 52 is the Nucleophile of the active site. Tyrosine 110 contacts substrate.

It belongs to the tRNA pseudouridine synthase TruA family. As to quaternary structure, homodimer.

The enzyme catalyses uridine(38/39/40) in tRNA = pseudouridine(38/39/40) in tRNA. Formation of pseudouridine at positions 38, 39 and 40 in the anticodon stem and loop of transfer RNAs. This chain is tRNA pseudouridine synthase A, found in Wigglesworthia glossinidia brevipalpis.